The chain runs to 115 residues: Large ribosomal subunit protein bL19 (115 aa).

This sequence belongs to the bacterial ribosomal protein bL19 family.

In terms of biological role, this protein is located at the 30S-50S ribosomal subunit interface and may play a role in the structure and function of the aminoacyl-tRNA binding site. The protein is Large ribosomal subunit protein bL19 of Escherichia coli O139:H28 (strain E24377A / ETEC).